Here is a 638-residue protein sequence, read N- to C-terminus: 1-deoxy-D-xylulose-5-phosphate synthase (638 aa).

Thiamine diphosphate contacts are provided by residues H75 and A116–S118. D147 lines the Mg(2+) pocket. Thiamine diphosphate is bound by residues G148–A149, N177, Y288, and E370. N177 is a binding site for Mg(2+).

It belongs to the transketolase family. DXPS subfamily. Homodimer. Requires Mg(2+) as cofactor. It depends on thiamine diphosphate as a cofactor.

The catalysed reaction is D-glyceraldehyde 3-phosphate + pyruvate + H(+) = 1-deoxy-D-xylulose 5-phosphate + CO2. It functions in the pathway metabolic intermediate biosynthesis; 1-deoxy-D-xylulose 5-phosphate biosynthesis; 1-deoxy-D-xylulose 5-phosphate from D-glyceraldehyde 3-phosphate and pyruvate: step 1/1. In terms of biological role, catalyzes the acyloin condensation reaction between C atoms 2 and 3 of pyruvate and glyceraldehyde 3-phosphate to yield 1-deoxy-D-xylulose-5-phosphate (DXP). The chain is 1-deoxy-D-xylulose-5-phosphate synthase from Cupriavidus pinatubonensis (strain JMP 134 / LMG 1197) (Cupriavidus necator (strain JMP 134)).